The chain runs to 191 residues: Ankyrin repeat domain-containing protein 22 (191 aa).

4 ANK repeats span residues 39-68 (NGDTPLICACRRGHLRIVSFLLRRNADVNL), 72-100 (KERTCLHYAVKKRFTFFDYLLIILLMPVL), 101-130 (LIGYFLMVSKTKQNETLVRMLLNAGVEVNA), and 134-163 (DGYTALHYACQMKNQTLIPLLLEAHADPMI).

The chain is Ankyrin repeat domain-containing protein 22 (Ankrd22) from Mus musculus (Mouse).